Consider the following 108-residue polypeptide: V-type proton ATPase subunit G (108 aa).

Positions 48 to 60 (YASKKEEEFKKSE) are enriched in basic and acidic residues. Residues 48-89 (YASKKEEEFKKSESQASGIYSQAEAESKKQVQDTFASIETSS) are disordered. Over residues 79–89 (QDTFASIETSS) the composition is skewed to polar residues.

Belongs to the V-ATPase G subunit family. In terms of assembly, V-ATPase is a heteromultimeric enzyme composed of a peripheral catalytic V1 complex (components A to H) attached to an integral membrane V0 proton pore complex (components: a, c, c', c'', d, e, f and VOA1).

Its subcellular location is the vacuole membrane. Subunit of the V1 complex of vacuolar(H+)-ATPase (V-ATPase), a multisubunit enzyme composed of a peripheral complex (V1) that hydrolyzes ATP and a membrane integral complex (V0) that translocates protons. V-ATPase is responsible for acidifying and maintaining the pH of intracellular compartments. This is V-type proton ATPase subunit G (vma10) from Schizosaccharomyces pombe (strain 972 / ATCC 24843) (Fission yeast).